We begin with the raw amino-acid sequence, 1594 residues long: Mucin-like protein (1594 aa).

Over Asp-1–Met-1530 the chain is Extracellular. TSP type-1 domains are found at residues Asp-141–Pro-196, Asp-198–Pro-253, and Asp-255–Pro-310. Intrachain disulfides connect Cys-153–Cys-190, Cys-157–Cys-195, Cys-168–Cys-180, Cys-210–Cys-247, Cys-214–Cys-252, Cys-225–Cys-237, Cys-267–Cys-304, Cys-271–Cys-309, and Cys-282–Cys-294. The 167-residue stretch at Leu-400–Asn-566 folds into the NIDO domain. An AMOP domain is found at Ile-568 to Arg-706. The 196-residue stretch at Arg-706–Leu-901 folds into the VWFD domain. EGF-like domains follow at residues Leu-1063–Gln-1108 and Lys-1110–Glu-1156. 14 disulfide bridges follow: Cys-1067-Cys-1075, Cys-1069-Cys-1096, Cys-1098-Cys-1107, Cys-1114-Cys-1127, Cys-1121-Cys-1141, Cys-1144-Cys-1155, Cys-1161-Cys-1173, Cys-1169-Cys-1182, Cys-1285-Cys-1296, Cys-1292-Cys-1305, Cys-1307-Cys-1320, Cys-1326-Cys-1341, Cys-1334-Cys-1350, and Cys-1352-Cys-1363. Positions Asp-1157 to Glu-1191 constitute an EGF-like 3; calcium-binding domain. The EGF-like 4; calcium-binding domain maps to Asp-1281–Glu-1321. The region spanning Asp-1322–Gln-1364 is the EGF-like 5; calcium-binding domain. Residues Ile-1531–Ile-1551 form a helical membrane-spanning segment. At Leu-1552–Arg-1593 the chain is on the cytoplasmic side.

As to expression, component of the acid-insoluble and acid-soluble organic matrix of the aragonitic skeleton (at protein level).

The protein localises to the membrane. In Acropora millepora (Staghorn coral), this protein is Mucin-like protein.